Reading from the N-terminus, the 571-residue chain is Sulfite reductase [NADPH] hemoprotein beta-component (571 aa).

[4Fe-4S] cluster-binding residues include cysteine 436, cysteine 442, cysteine 481, and cysteine 485. Residue cysteine 485 participates in siroheme binding.

It belongs to the nitrite and sulfite reductase 4Fe-4S domain family. As to quaternary structure, alpha(8)-beta(8). The alpha component is a flavoprotein, the beta component is a hemoprotein. Siroheme serves as cofactor. [4Fe-4S] cluster is required as a cofactor.

It catalyses the reaction hydrogen sulfide + 3 NADP(+) + 3 H2O = sulfite + 3 NADPH + 4 H(+). It participates in sulfur metabolism; hydrogen sulfide biosynthesis; hydrogen sulfide from sulfite (NADPH route): step 1/1. Component of the sulfite reductase complex that catalyzes the 6-electron reduction of sulfite to sulfide. This is one of several activities required for the biosynthesis of L-cysteine from sulfate. The sequence is that of Sulfite reductase [NADPH] hemoprotein beta-component (cysI) from Bacillus subtilis (strain 168).